A 212-amino-acid chain; its full sequence is Pyridoxine/pyridoxamine 5'-phosphate oxidase (212 aa).

Substrate is bound by residues 8–11 (RREY) and lysine 66. FMN contacts are provided by residues 61-66 (RIVLLK), 76-77 (FT), arginine 82, lysine 83, and glutamine 105. Substrate is bound by residues tyrosine 123, arginine 127, and serine 131. FMN is bound by residues 140–141 (QS) and tryptophan 185. 191–193 (RLH) serves as a coordination point for substrate. Arginine 195 serves as a coordination point for FMN.

Belongs to the pyridoxamine 5'-phosphate oxidase family. Homodimer. Requires FMN as cofactor.

It catalyses the reaction pyridoxamine 5'-phosphate + O2 + H2O = pyridoxal 5'-phosphate + H2O2 + NH4(+). The enzyme catalyses pyridoxine 5'-phosphate + O2 = pyridoxal 5'-phosphate + H2O2. It functions in the pathway cofactor metabolism; pyridoxal 5'-phosphate salvage; pyridoxal 5'-phosphate from pyridoxamine 5'-phosphate: step 1/1. Its pathway is cofactor metabolism; pyridoxal 5'-phosphate salvage; pyridoxal 5'-phosphate from pyridoxine 5'-phosphate: step 1/1. Catalyzes the oxidation of either pyridoxine 5'-phosphate (PNP) or pyridoxamine 5'-phosphate (PMP) into pyridoxal 5'-phosphate (PLP). This is Pyridoxine/pyridoxamine 5'-phosphate oxidase from Shewanella sp. (strain MR-7).